We begin with the raw amino-acid sequence, 454 residues long: NADH-quinone oxidoreductase subunit H (454 aa).

Transmembrane regions (helical) follow at residues 18–38 (WWLV…TVLF), 88–108 (VVYV…IAVI), 131–151 (LPIA…GIVL), 172–192 (MISY…YSGS), 206–226 (WYIV…VGET), 256–276 (FMLA…TLFL), 296–316 (WWPM…FIWL), 328–348 (LMKL…MLVA), and 360–380 (FADI…LSFV). Residues 395–454 (AEEPAAFDPMAGGFPVPPLPGQTLPPVPRRRPRRDRELIVSGGPDTASDGPANGKEASDG) are disordered. Residues 409-421 (PVPPLPGQTLPPV) are compositionally biased toward pro residues.

The protein belongs to the complex I subunit 1 family. NDH-1 is composed of 14 different subunits. Subunits NuoA, H, J, K, L, M, N constitute the membrane sector of the complex.

It is found in the cell membrane. It catalyses the reaction a quinone + NADH + 5 H(+)(in) = a quinol + NAD(+) + 4 H(+)(out). In terms of biological role, NDH-1 shuttles electrons from NADH, via FMN and iron-sulfur (Fe-S) centers, to quinones in the respiratory chain. The immediate electron acceptor for the enzyme in this species is believed to be ubiquinone. Couples the redox reaction to proton translocation (for every two electrons transferred, four hydrogen ions are translocated across the cytoplasmic membrane), and thus conserves the redox energy in a proton gradient. This subunit may bind ubiquinone. The protein is NADH-quinone oxidoreductase subunit H of Streptomyces avermitilis (strain ATCC 31267 / DSM 46492 / JCM 5070 / NBRC 14893 / NCIMB 12804 / NRRL 8165 / MA-4680).